The primary structure comprises 661 residues: Kyphoscoliosis peptidase (661 aa).

The disordered stretch occupies residues 116–137 (GDKNGNMRPRQPGGKDAHAYPW). Active-site residues include Cys-225, His-267, and Asp-282.

It belongs to the transglutaminase-like superfamily. In terms of assembly, interacts with IGFN1 and FLNC. In terms of tissue distribution, specifically expressed in skeletal and cardiac muscle.

Its subcellular location is the cytoplasm. The protein resides in the cytoskeleton. It localises to the myofibril. The protein localises to the sarcomere. It is found in the z line. In terms of biological role, probable cytoskeleton-associated protease required for normal muscle growth. Involved in function, maturation and stabilization of the neuromuscular junction. May act by cleaving muscle-specific proteins such as FLNC. The sequence is that of Kyphoscoliosis peptidase from Mus musculus (Mouse).